Consider the following 469-residue polypeptide: GTPase Der (469 aa).

EngA-type G domains follow at residues 30–193 (PVLA…PEVA) and 203–376 (RRVA…ASWD). GTP is bound by residues 36 to 43 (GRPNVGKS), 83 to 87 (DTGGW), 145 to 148 (NKVD), 209 to 216 (GKPNVGKS), 256 to 260 (DTAGL), and 321 to 324 (NKWD). The 83-residue stretch at 377–459 (TRIPTGPLNS…PIRINVRVRE (83 aa)) folds into the KH-like domain.

Belongs to the TRAFAC class TrmE-Era-EngA-EngB-Septin-like GTPase superfamily. EngA (Der) GTPase family. In terms of assembly, associates with the 50S ribosomal subunit.

In terms of biological role, GTPase that plays an essential role in the late steps of ribosome biogenesis. This Mycobacterium ulcerans (strain Agy99) protein is GTPase Der.